A 90-amino-acid polypeptide reads, in one-letter code: Molybdopterin synthase sulfur carrier subunit (90 aa).

Gly90 is modified (1-thioglycine; alternate). Gly90 bears the Glycyl adenylate; alternate mark.

It belongs to the MoaD family. MOCS2A subfamily. As to quaternary structure, heterotetramer; composed of 2 small (Mocs2A) and 2 large (Mocs2B) subunits. In terms of processing, C-terminal thiocarboxylation occurs in 2 steps, it is first acyl-adenylated (-COAMP) via the hesA/moeB/thiF part of MOCS3, then thiocarboxylated (-COSH) via the rhodanese domain of MOCS3.

The protein localises to the cytoplasm. It participates in cofactor biosynthesis; molybdopterin biosynthesis. Its function is as follows. Acts as a sulfur carrier required for molybdopterin biosynthesis. Component of the molybdopterin synthase complex that catalyzes the conversion of precursor Z into molybdopterin by mediating the incorporation of 2 sulfur atoms into precursor Z to generate a dithiolene group. In the complex, serves as sulfur donor by being thiocarboxylated (-COSH) at its C-terminus by MOCS3. After interaction with Mocs2B, the sulfur is then transferred to precursor Z to form molybdopterin. Involved during biosynthesis of the molybdenum cofactor. The protein is Molybdopterin synthase sulfur carrier subunit of Drosophila melanogaster (Fruit fly).